We begin with the raw amino-acid sequence, 322 residues long: Cyclin mcs2 (322 aa).

S310 is modified (phosphoserine).

This sequence belongs to the cyclin family. Cyclin C subfamily. One of the nine subunits forming the core-TFIIH basal transcription factor. Interacts with crk1 and skp1.

It localises to the nucleus. In terms of biological role, essential for progression through the cell cycle. Possesses kinase activity that can be detected when myelin basic protein (MBP) is provided as an exogenous substrate. The chain is Cyclin mcs2 (mcs2) from Schizosaccharomyces pombe (strain 972 / ATCC 24843) (Fission yeast).